We begin with the raw amino-acid sequence, 624 residues long: Fibronectin type III domain-containing protein 2 (624 aa).

A signal peptide spans 1 to 19 (MREQFSVLVISLLFSSSYG). 5 Fibronectin type-III domains span residues 131 to 236 (PPQN…TPDI), 240 to 330 (EPTN…TDVF), 334 to 430 (MPRF…TVPT), 431 to 524 (VPRE…PKRD), and 527 to 624 (VPPN…WPGR).

In terms of tissue distribution, prismatic layer of shell (at protein level).

The protein resides in the secreted. The protein is Fibronectin type III domain-containing protein 2 of Margaritifera margaritifera (Freshwater pearl mussel).